A 587-amino-acid polypeptide reads, in one-letter code: Kelch-like protein 3 (587 aa).

Positions 1 to 24 (MEGESVKPSPQPTEQAGDGEKNRR) are disordered. In terms of domain architecture, BTB spans 50–117 (CDVMIVAEDV…IYTAEIEVTE (68 aa)). In terms of domain architecture, BACK spans 152-254 (CLGIRAFADV…PRDYLVQTVE (103 aa)). Thr295 is subject to Phosphothreonine. Kelch repeat units follow at residues 302-347 (VMIV…FMAG), 348-394 (HVYA…VLND), 396-441 (LYAV…VVEG), 442-490 (KLYA…VLSG), 491-537 (QLYA…AVNG), and 539-585 (LYVV…VSAS). A Phosphothreonine modification is found at Thr375. Ser376 and Ser433 each carry phosphoserine.

This sequence belongs to the KLHL3 family. In terms of assembly, homodimer. Component of the BCR(KLHL3) E3 ubiquitin ligase complex, at least composed of CUL3 and KLHL3 and RBX1. Interacts with CLDN8. Phosphorylation at Ser-433 by PKA or PKC decreases the interaction with WNK1 and WNK4, leading to inhibit their degradation by the BCR(KLHL3) complex. Phosphorylated at Ser-433 by PKC in response to angiotensin II signaling, decreasing ability to promote degradation of WNK1 and WNK4, leading to activation of Na-Cl cotransporter SLC12A3/NCC. Phosphorylation at Ser-433 is increased by insulin. Dephosphorylated at Ser-433 by calcineurin PPP3CA, promoting degradation of WNK1 and WNK4.

The protein resides in the cytoplasm. It localises to the cytoskeleton. Its subcellular location is the cytosol. Its pathway is protein modification; protein ubiquitination. Its function is as follows. Substrate-specific adapter of a BCR (BTB-CUL3-RBX1) E3 ubiquitin ligase complex that acts as a regulator of ion transport in the distal nephron. The BCR(KLHL3) complex acts by mediating ubiquitination and degradation of WNK1 and WNK4, two activators of Na-Cl cotransporter SLC12A3/NCC in distal convoluted tubule cells of kidney, thereby regulating NaCl reabsorption. The BCR(KLHL3) complex also mediates ubiquitination and degradation of WNK3. The BCR(KLHL3) complex also mediates ubiquitination of CLDN8, a tight-junction protein required for paracellular chloride transport in the kidney, leading to its degradation. The chain is Kelch-like protein 3 (Klhl3) from Rattus norvegicus (Rat).